A 435-amino-acid chain; its full sequence is Asparagine--tRNA ligase (435 aa).

The protein belongs to the class-II aminoacyl-tRNA synthetase family. As to quaternary structure, homodimer.

It localises to the cytoplasm. The catalysed reaction is tRNA(Asn) + L-asparagine + ATP = L-asparaginyl-tRNA(Asn) + AMP + diphosphate + H(+). The chain is Asparagine--tRNA ligase from Leptospira interrogans serogroup Icterohaemorrhagiae serovar copenhageni (strain Fiocruz L1-130).